A 172-amino-acid chain; its full sequence is Neudesin (172 aa).

The first 31 residues, 1–31 (MVGPAPRRRLRPLAALALVLALAPGLPTARA), serve as a signal peptide directing secretion. A Cytochrome b5 heme-binding domain is found at 44–129 (VRLFTEEELA…KELEALDEVF (86 aa)). N6-acetyllysine is present on Lys-136. The segment at 151-172 (DGSPNLDFKPEDQPHFDIKDEF) is disordered. Positions 158 to 172 (FKPEDQPHFDIKDEF) are enriched in basic and acidic residues.

This sequence belongs to the cytochrome b5 family. MAPR subfamily. In terms of assembly, interacts with PINK1 and PARK7. In terms of tissue distribution, ubiquitously expressed with high expression in heart. Over-expressed in various tumors including carcinomas of the uterine cervix, lymphoma, colon, lung, skin and leukemia, as well as carcinoma of the breast.

It localises to the secreted. The protein localises to the extracellular space. It is found in the mitochondrion. The protein resides in the endoplasmic reticulum. Acts as a neurotrophic factor in postnatal mature neurons enhancing neuronal survival. Promotes cell proliferation and neurogenesis in undifferentiated neural progenitor cells at the embryonic stage and inhibits differentiation of astrocytes. Its neurotrophic activity is exerted via MAPK1/ERK2, MAPK3/ERK1 and AKT1/AKT pathways. Neurotrophic activity is enhanced by binding to heme. Also acts as an anorexigenic neurotrophic factor that contributes to energy balance. The protein is Neudesin of Homo sapiens (Human).